A 271-amino-acid polypeptide reads, in one-letter code: Sulfur carrier protein adenylyltransferase (271 aa).

ATP is bound by residues R13, G40, E61, R72, K85, L109, and 129–133; that span reads DNFPT. Zn(2+) is bound by residues C175 and C178. A Glycyl cysteine thioester (Cys-Gly) (interchain with G-Cter in TtuB) cross-link involves residue C192. Residues C249 and C252 each contribute to the Zn(2+) site.

It belongs to the HesA/MoeB/ThiF family. Zn(2+) serves as cofactor. Post-translationally, conjugated to TtuB via a covalent linkage that likely involves a lysine residue. Is able to form a covalent thioester adduct with TtuB via Cys-192 in vitro.

The catalysed reaction is [molybdopterin-synthase sulfur-carrier protein]-C-terminal Gly-Gly + ATP + H(+) = [molybdopterin-synthase sulfur-carrier protein]-C-terminal Gly-Gly-AMP + diphosphate. It catalyses the reaction [ThiS sulfur-carrier protein]-C-terminal Gly-Gly + ATP + H(+) = [ThiS sulfur-carrier protein]-C-terminal Gly-Gly-AMP + diphosphate. It carries out the reaction [TtuB sulfur-carrier protein]-C-terminal Gly-Gly + ATP + H(+) = [TtuB sulfur-carrier protein]-C-terminal Gly-Gly-AMP + diphosphate. Its pathway is tRNA modification. The protein operates within cofactor biosynthesis; thiamine diphosphate biosynthesis. It participates in cofactor biosynthesis; molybdopterin biosynthesis. Its activity is regulated as follows. Enzymatic activity may be regulated by TtuB conjugation. Adenylyltransferase involved in the biosynthesis of several sulfur compounds. Is required for the 2-thiolation of 5-methyluridine residue at position 54 in the T loop of tRNAs, leading to 5-methyl-2-thiouridine (m(5)s(2)U or s(2)T). This modification allows thermal stabilization of tRNAs in thermophilic microorganisms, and is essential for cell growth at high temperatures. TtuC catalyzes the adenylation by ATP of the carboxyl group of the C-terminal glycine of sulfur carrier protein TtuB. Is also involved in the biosynthesis of thiamine, molybdenum cofactor (Moco) and probably tungsten cofactor (Wco), by adenylating the sulfur carriers ThiS and MoaD. Is required for the conjugation of TtuB to target proteins. The chain is Sulfur carrier protein adenylyltransferase from Thermus thermophilus (strain ATCC BAA-163 / DSM 7039 / HB27).